Consider the following 888-residue polypeptide: Inactive deaminase YJL070C (888 aa).

The segment at 1 to 42 (MQAVERRPSLLFDEYQNSVTKPNETKNKEARVLSENDGDVSP) is disordered. S9 is modified (phosphoserine). The span at 23–34 (NETKNKEARVLS) shows a compositional bias: basic and acidic residues. A phosphoserine mark is found at S41, S178, and S180.

It belongs to the metallo-dependent hydrolases superfamily. Adenosine and AMP deaminases family.

The chain is Inactive deaminase YJL070C from Saccharomyces cerevisiae (strain ATCC 204508 / S288c) (Baker's yeast).